A 119-amino-acid polypeptide reads, in one-letter code: MATRIPKTPSTPPAQKPAGDDGDSVVLERRPQKTAPPQMYQVVMLNDDYTPMEFVIVVLQEYFNKDRETATQIMLKIHLDGRGVCGVYSRDLAATKVNQVMEAAHQAGHPLQCVSEPIA.

Residues 1–33 form a disordered region; it reads MATRIPKTPSTPPAQKPAGDDGDSVVLERRPQK.

It belongs to the ClpS family. As to quaternary structure, binds to the N-terminal domain of the chaperone ClpA.

Its function is as follows. Involved in the modulation of the specificity of the ClpAP-mediated ATP-dependent protein degradation. The chain is ATP-dependent Clp protease adapter protein ClpS from Variovorax paradoxus (strain S110).